The following is a 359-amino-acid chain: Peptide chain release factor 1 (359 aa).

Gln236 is modified (N5-methylglutamine). Residues 288–307 (QDEQDAERKSTIGTGDRSER) are disordered. Positions 293-307 (AERKSTIGTGDRSER) are enriched in basic and acidic residues.

The protein belongs to the prokaryotic/mitochondrial release factor family. Post-translationally, methylated by PrmC. Methylation increases the termination efficiency of RF1.

Its subcellular location is the cytoplasm. In terms of biological role, peptide chain release factor 1 directs the termination of translation in response to the peptide chain termination codons UAG and UAA. This is Peptide chain release factor 1 from Streptococcus sanguinis (strain SK36).